The following is an 810-amino-acid chain: Protein kinase C-binding protein NELL1 (810 aa).

The signal sequence occupies residues 1–21; sequence MPMDVILVLWFCVCTARTVLG. Residues Asn-40, Asn-53, Asn-83, Asn-224, Asn-294, and Asn-372 are each glycosylated (N-linked (GlcNAc...) asparagine). Residues 57-227 enclose the Laminin G-like domain; it reads AFLFQDVQRE…TQCPNLNRTC (171 aa). The 62-residue stretch at 271 to 332 folds into the VWFC 1 domain; that stretch reads KTCQVSGLLY…ISGQCCKVCR (62 aa). 3 cysteine pairs are disulfide-bonded: Cys-395-Cys-407, Cys-401-Cys-416, and Cys-418-Cys-432. Ca(2+)-binding residues include Asp-434, Ile-435, and Glu-437. In terms of domain architecture, EGF-like 1; calcium-binding spans 434-475; that stretch reads DIDECAAKMHYCHANTVCVNLPGLYRCDCIPGYIRVDDFSCT. 15 disulfides stabilise this stretch: Cys-438–Cys-451, Cys-445–Cys-460, Cys-462–Cys-474, Cys-480–Cys-493, Cys-487–Cys-502, Cys-504–Cys-515, Cys-519–Cys-529, Cys-523–Cys-535, Cys-537–Cys-546, Cys-553–Cys-566, Cys-560–Cys-575, Cys-577–Cys-594, Cys-600–Cys-613, Cys-607–Cys-622, and Cys-624–Cys-630. Positions 453, 454, and 457 each coordinate Ca(2+). An EGF-like 2; calcium-binding domain is found at 476–516; it reads EHDDCGSGQHNCDKNAICTNTVQGHSCTCQPGYVGNGTVCK. N-linked (GlcNAc...) asparagine glycosylation occurs at Asn-511. Positions 517-547 constitute an EGF-like 3 domain; the sequence is AFCEEGCRYGGTCVAPNKCVCPSGFTGSHCE. The EGF-like 4; calcium-binding domain occupies 549–587; the sequence is DIDECAEGFVECHNHSRCVNLPGWYHCECRSGFHDDGTY. Residue Asn-562 is glycosylated (N-linked (GlcNAc...) asparagine). Residues 596 to 631 form the EGF-like 5; calcium-binding domain; sequence DIDECALRTHTCWNDSACINLAGGFDCLCPSGPSCS. Residue Asn-609 is glycosylated (N-linked (GlcNAc...) asparagine). 2 VWFC domains span residues 632–687 and 692–750; these read GDCP…PECD and SQCL…PRCV. Residue Asn-708 is glycosylated (N-linked (GlcNAc...) asparagine).

Homotrimer. Binds to PKC beta-1. Interacts with ATRAID; the interaction promotes osteoblast cell differentiation and mineralization. Interacts with ROBO3.

The protein resides in the cytoplasm. Its subcellular location is the nucleus envelope. The protein localises to the secreted. Its function is as follows. Plays a role in the control of cell growth and differentiation. Promotes osteoblast cell differentiation and terminal mineralization. This is Protein kinase C-binding protein NELL1 (Nell1) from Mus musculus (Mouse).